The chain runs to 156 residues: 6,7-dimethyl-8-ribityllumazine synthase (156 aa).

Residues Phe23, 57-59 (SFE), and 81-83 (AVI) contribute to the 5-amino-6-(D-ribitylamino)uracil site. 86–87 (GT) is a (2S)-2-hydroxy-3-oxobutyl phosphate binding site. His89 functions as the Proton donor in the catalytic mechanism. Phe114 lines the 5-amino-6-(D-ribitylamino)uracil pocket. Arg128 provides a ligand contact to (2S)-2-hydroxy-3-oxobutyl phosphate.

The protein belongs to the DMRL synthase family. In terms of assembly, forms an icosahedral capsid composed of 60 subunits, arranged as a dodecamer of pentamers.

The enzyme catalyses (2S)-2-hydroxy-3-oxobutyl phosphate + 5-amino-6-(D-ribitylamino)uracil = 6,7-dimethyl-8-(1-D-ribityl)lumazine + phosphate + 2 H2O + H(+). It functions in the pathway cofactor biosynthesis; riboflavin biosynthesis; riboflavin from 2-hydroxy-3-oxobutyl phosphate and 5-amino-6-(D-ribitylamino)uracil: step 1/2. In terms of biological role, catalyzes the formation of 6,7-dimethyl-8-ribityllumazine by condensation of 5-amino-6-(D-ribitylamino)uracil with 3,4-dihydroxy-2-butanone 4-phosphate. This is the penultimate step in the biosynthesis of riboflavin. This chain is 6,7-dimethyl-8-ribityllumazine synthase, found in Alkalilimnicola ehrlichii (strain ATCC BAA-1101 / DSM 17681 / MLHE-1).